Here is a 106-residue protein sequence, read N- to C-terminus: N(4)-acetylcytidine amidohydrolase (106 aa).

Residues 9-105 (TFFEFLTPLI…ELYVIEYELI (97 aa)) form the ASCH domain. K23 functions as the Proton acceptor in the catalytic mechanism. T26 serves as the catalytic Nucleophile. E76 (proton donor) is an active-site residue.

It belongs to the N(4)-acetylcytidine amidohydrolase family.

The catalysed reaction is N(4)-acetylcytidine + H2O = cytidine + acetate + H(+). It carries out the reaction N(4)-acetyl-2'-deoxycytidine + H2O = 2'-deoxycytidine + acetate + H(+). It catalyses the reaction N(4)-acetylcytosine + H2O = cytosine + acetate + H(+). Catalyzes the hydrolysis of N(4)-acetylcytidine (ac4C). The protein is N(4)-acetylcytidine amidohydrolase of Vibrio campbellii (strain ATCC BAA-1116).